Reading from the N-terminus, the 608-residue chain is DNA mismatch repair protein MutL (608 aa).

This sequence belongs to the DNA mismatch repair MutL/HexB family.

Functionally, this protein is involved in the repair of mismatches in DNA. It is required for dam-dependent methyl-directed DNA mismatch repair. May act as a 'molecular matchmaker', a protein that promotes the formation of a stable complex between two or more DNA-binding proteins in an ATP-dependent manner without itself being part of a final effector complex. The polypeptide is DNA mismatch repair protein MutL (Anaeromyxobacter dehalogenans (strain 2CP-C)).